We begin with the raw amino-acid sequence, 778 residues long: Aconitate hydratase, mitochondrial (778 aa).

The transit peptide at 1–16 (MLSARSAIKRPIVRGL) directs the protein to the mitochondrion. Residues Gln95 and 188–190 (DSH) each bind substrate. Cys382 lines the [4Fe-4S] cluster pocket. At Ser391 the chain carries Phosphoserine. Thr409 bears the Phosphothreonine mark. Residues Cys445 and Cys448 each coordinate [4Fe-4S] cluster. Substrate contacts are provided by Arg471 and Arg476. The residue at position 556 (Ser556) is a Phosphoserine. Substrate is bound by residues Arg604 and 667–668 (SR).

It belongs to the aconitase/IPM isomerase family. In terms of assembly, monomer. Binds to mitochondrial DNA (mtDNA) and identified as component of mitochondrial nucleoids. [4Fe-4S] cluster serves as cofactor.

Its subcellular location is the mitochondrion. The protein localises to the cytoplasm. It carries out the reaction citrate = D-threo-isocitrate. Its pathway is carbohydrate metabolism; tricarboxylic acid cycle; isocitrate from oxaloacetate: step 2/2. Its activity is regulated as follows. Subject to catabolite regulation. Its function is as follows. Catalyzes the isomerization of citrate to isocitrate via cis-aconitate, a step in the citric acid cycle. Can also provide minor contributions to the reversible dehydration of (R)-homocitrate to cis-homoaconitate, a step in the alpha-aminoadipate pathway for lysine biosynthesis. Also plays an essential role in mtDNA maintenance. May directly protect mtDNA from accumulation of point mutations and ssDNA breaks as a component of mitochondrial nucleoids, or by preventing accumulation of iron citrate thereby alleviating its detrimental effects in mitochondria. The chain is Aconitate hydratase, mitochondrial from Saccharomyces cerevisiae (strain ATCC 204508 / S288c) (Baker's yeast).